Here is a 602-residue protein sequence, read N- to C-terminus: ATP-dependent DNA helicase II subunit 1 (602 aa).

The 216-residue stretch at 268–483 folds into the Ku domain; that stretch reads FQCPLILDEK…YDNMKKVTQS (216 aa). Phosphoserine occurs at positions 370, 371, and 372.

The protein belongs to the ku70 family. Heterodimer of YKU70/HDF1 and YKU80/HDF2. Post-translationally, sumoylated by MMS21.

It is found in the nucleus. The protein localises to the chromosome. Its subcellular location is the telomere. It carries out the reaction ATP + H2O = ADP + phosphate + H(+). In terms of biological role, single-stranded DNA-dependent ATP-dependent helicase. Involved in non-homologous end joining (NHEJ) DNA double strand break repair. DNA-binding is sequence-independent but has a high affinity to nicks in double-stranded DNA and to the ends of duplex DNA. Binds to naturally occurring chromosomal ends, and therefore provides chromosomal end protection. Appears to have a role in recruitment of telomerase and CDC13 to the telomere and the subsequent telomere elongation. Required also for telomere recombination to repair telomeric ends in the absence of telomerase. KU70, of the KU70/KU80 heterodimer, binds to the stem loop of TLC1, the RNA component of telomerase. Involved in telomere maintenance. Interacts with telomeric repeats and subtelomeric sequences thereby controlling telomere length and protecting against subtelomeric rearrangement. Maintains telomeric chromatin, which is involved in silencing the expression of genes located at the telomere. Required for mating-type switching. The chain is ATP-dependent DNA helicase II subunit 1 (YKU70) from Saccharomyces cerevisiae (strain ATCC 204508 / S288c) (Baker's yeast).